A 41-amino-acid polypeptide reads, in one-letter code: Large ribosomal subunit protein bL36 (41 aa).

It belongs to the bacterial ribosomal protein bL36 family.

The chain is Large ribosomal subunit protein bL36 from Xanthomonas axonopodis pv. citri (strain 306).